The sequence spans 290 residues: Diaminopimelate epimerase (290 aa).

Substrate is bound by residues N14 and N67. The active-site Proton donor is C76. Substrate contacts are provided by residues 77–78 (GN), N166, N199, and 217–218 (ER). The active-site Proton acceptor is the C226. 227–228 (GT) serves as a coordination point for substrate.

Belongs to the diaminopimelate epimerase family. Homodimer.

Its subcellular location is the cytoplasm. It carries out the reaction (2S,6S)-2,6-diaminopimelate = meso-2,6-diaminopimelate. The protein operates within amino-acid biosynthesis; L-lysine biosynthesis via DAP pathway; DL-2,6-diaminopimelate from LL-2,6-diaminopimelate: step 1/1. In terms of biological role, catalyzes the stereoinversion of LL-2,6-diaminopimelate (L,L-DAP) to meso-diaminopimelate (meso-DAP), a precursor of L-lysine and an essential component of the bacterial peptidoglycan. This Geobacillus kaustophilus (strain HTA426) protein is Diaminopimelate epimerase.